The primary structure comprises 98 residues: MPLISTNILLAFITALLGVLIYRSHLMSSLLCLEGMMLSMFILVSLTTMNLHFTLANIAPLILLVFAACEAAVGLALLVMVSNTYGMDYIQNLNLLQC.

Transmembrane regions (helical) follow at residues 1–21, 26–46, and 61–81; these read MPLISTNILLAFITALLGVLI, LMSSLLCLEGMMLSMFILVSL, and LILLVFAACEAAVGLALLVMV.

This sequence belongs to the complex I subunit 4L family. As to quaternary structure, core subunit of respiratory chain NADH dehydrogenase (Complex I) which is composed of 45 different subunits.

It localises to the mitochondrion inner membrane. The catalysed reaction is a ubiquinone + NADH + 5 H(+)(in) = a ubiquinol + NAD(+) + 4 H(+)(out). In terms of biological role, core subunit of the mitochondrial membrane respiratory chain NADH dehydrogenase (Complex I) which catalyzes electron transfer from NADH through the respiratory chain, using ubiquinone as an electron acceptor. Part of the enzyme membrane arm which is embedded in the lipid bilayer and involved in proton translocation. The chain is NADH-ubiquinone oxidoreductase chain 4L (MT-ND4L) from Nycticebus coucang (Slow loris).